Consider the following 131-residue polypeptide: uncharacterized protein (131 aa).

This is an uncharacterized protein from Bacillus subtilis (strain 168).